Consider the following 480-residue polypeptide: MLYRNRFLVLLALAGLLAFLSLSLQFFHLIPVSTTKNGGSSKSRKRIMPDPVTEPPTVDPVYEALLYCNIPSVAEHSMEGHAPHHYKLVSVHVFIRHGDRYPLYAIPKTKRPEIDCTLVASRKPYHPKLEAFVGHMLKGSGASFESPLGSLPLYPNHPLCEMGELTQTGVVQHLQNGQLLRDIYLRKHKLLPNNWSSDQLYLETTGKSRTLQSGLALLYGFLPEFDWKKVYFKHQPSALFCSGSCYCPLRNQYLEKEQRRQYLLRLKNSDLERTYGEMAKIVDIPTKQLRAANPIDSMLCHFCHNVSFPCSRSGCLGMEHFKVIKTHQIEDERERHEKLLYFGYSLLGAHPILNQTVNRMQRAALGWRDELFTLYSAHDVTLSPILSALGLLEARFPRFAARLVFELWQDRQKPSEHSVRILYNGADVTFHTSFCHDFHKHSPKPMCPLENLVRFVKRDMFVALDGSSTNYYDACHGEGA.

At 1-6 the chain is on the cytoplasmic side; sequence MLYRNR. Residues 7–27 traverse the membrane as a helical; Signal-anchor for type II membrane protein segment; that stretch reads FLVLLALAGLLAFLSLSLQFF. At 28-480 the chain is on the lumenal side; the sequence is HLIPVSTTKN…YYDACHGEGA (453 aa). Catalysis depends on His-97, which acts as the Nucleophile. Residues Asn-194, Asn-305, and Asn-354 are each glycosylated (N-linked (GlcNAc...) asparagine). The Proton donor role is filled by Asp-379.

This sequence belongs to the histidine acid phosphatase family. In terms of assembly, interacts with B3GAT3; the interaction increases the 2-phosphoxylose phosphatase activity of PXYLP1 during completion of linkage region formation in a B3GAT3-mediated manner.

It localises to the golgi apparatus membrane. The catalysed reaction is 3-O-[beta-D-GlcA-(1-&gt;3)-beta-D-Gal-(1-&gt;3)-beta-D-Gal-(1-&gt;4)-beta-D-2-O-P-Xyl]-L-seryl-[protein] + H2O = 3-O-(beta-D-GlcA-(1-&gt;3)-beta-D-Gal-(1-&gt;3)-beta-D-Gal-(1-&gt;4)-beta-D-Xyl)-L-seryl-[protein] + phosphate. In terms of biological role, responsible for the 2-O-dephosphorylation of xylose in the glycosaminoglycan-protein linkage region of proteoglycans thereby regulating the amount of mature glycosaminoglycan (GAG) chains. Sulfated glycosaminoglycans (GAGs), including heparan sulfate and chondroitin sulfate, are synthesized on the so-called common GAG-protein linkage region (GlcUAbeta1-3Galbeta1-3Galbeta1-4Xylbeta1-O-Ser) of core proteins, which is formed by the stepwise addition of monosaccharide residues by the respective specific glycosyltransferases. Xylose 2-O-dephosphorylation during completion of linkage region formation is a prerequisite for the initiation and efficient elongation of the repeating disaccharide region of GAG chains. In Rattus norvegicus (Rat), this protein is 2-phosphoxylose phosphatase 1.